The sequence spans 98 residues: NADH-ubiquinone oxidoreductase chain 4L (98 aa).

A run of 3 helical transmembrane segments spans residues 1 to 21, 29 to 49, and 61 to 81; these read MSLV…GLLM, SLLC…LMIL, and IILL…LVMV.

Belongs to the complex I subunit 4L family. As to quaternary structure, core subunit of respiratory chain NADH dehydrogenase (Complex I) which is composed of 45 different subunits.

It localises to the mitochondrion inner membrane. It catalyses the reaction a ubiquinone + NADH + 5 H(+)(in) = a ubiquinol + NAD(+) + 4 H(+)(out). Core subunit of the mitochondrial membrane respiratory chain NADH dehydrogenase (Complex I) which catalyzes electron transfer from NADH through the respiratory chain, using ubiquinone as an electron acceptor. Part of the enzyme membrane arm which is embedded in the lipid bilayer and involved in proton translocation. This is NADH-ubiquinone oxidoreductase chain 4L (MT-ND4L) from Ovis aries (Sheep).